The chain runs to 313 residues: Olfactory receptor 2B6 (313 aa).

Topologically, residues 1–25 (MNWVNDSIIQEFILLGFSDRPWLEF) are extracellular. Asn-5 carries N-linked (GlcNAc...) asparagine glycosylation. A helical transmembrane segment spans residues 26-49 (PLLVVFLISYTVTIFGNLTIILVS). The Cytoplasmic portion of the chain corresponds to 50–57 (RLDTKLHT). The chain crosses the membrane as a helical span at residues 58–79 (PMYFFLTNLSLLDLCYTTCTVP). At 80–100 (QMLVNLCSIRKVISYRGCVAQ) the chain is on the extracellular side. The cysteines at positions 97 and 189 are disulfide-linked. A helical membrane pass occupies residues 101–120 (LFIFLALGATEYLLLAVMSF). At 121–139 (DRFVAICRPLHYSVIMHQR) the chain is on the cytoplasmic side. A helical transmembrane segment spans residues 140-158 (LCLQLAAASWVTGFSNSVW). Residues 159–195 (LSTLTLQLPLCDPYVIDHFLCEVPALLKLSCVETTAN) lie on the Extracellular side of the membrane. Residues 196–219 (EAELFLVSELFHLIPLTLILISYA) traverse the membrane as a helical segment. Topologically, residues 220 to 236 (FIVRAVLRIQSAEGRQK) are cytoplasmic. A helical membrane pass occupies residues 237 to 259 (AFGTCGSHLIVVSLFYSTAVSVY). Topologically, residues 260–272 (LQPPSPSSKDQGK) are extracellular. Residues 273 to 292 (MVSLFYGIIAPMLNPLIYTL) form a helical membrane-spanning segment. At 293-313 (RNKEVKEGFKRLVARVFLIKK) the chain is on the cytoplasmic side.

The protein belongs to the G-protein coupled receptor 1 family.

The protein localises to the cell membrane. Its function is as follows. Odorant receptor. The protein is Olfactory receptor 2B6 of Homo sapiens (Human).